A 110-amino-acid polypeptide reads, in one-letter code: MSDTFQRIAPEQARQLRENGAQVVDIRDPQSYALGHISGSRHIDNHSVVDFIAAADLDAPLVVVCYHGNSSQSAAAYFIQQGFSDVYSLDGGFELWRSVYPADTSTGEAE.

The 89-residue stretch at 17–105 folds into the Rhodanese domain; it reads RENGAQVVDI…WRSVYPADTS (89 aa). The active-site Cysteine persulfide intermediate is cysteine 65.

This sequence belongs to the GlpE family.

It is found in the cytoplasm. The enzyme catalyses thiosulfate + hydrogen cyanide = thiocyanate + sulfite + 2 H(+). It catalyses the reaction thiosulfate + [thioredoxin]-dithiol = [thioredoxin]-disulfide + hydrogen sulfide + sulfite + 2 H(+). Transferase that catalyzes the transfer of sulfur from thiosulfate to thiophilic acceptors such as cyanide or dithiols. May function in a CysM-independent thiosulfate assimilation pathway by catalyzing the conversion of thiosulfate to sulfite, which can then be used for L-cysteine biosynthesis. This Pseudomonas paraeruginosa (strain DSM 24068 / PA7) (Pseudomonas aeruginosa (strain PA7)) protein is Thiosulfate sulfurtransferase GlpE.